A 130-amino-acid chain; its full sequence is Transcription antitermination protein NusB (130 aa).

Belongs to the NusB family.

Its function is as follows. Involved in transcription antitermination. Required for transcription of ribosomal RNA (rRNA) genes. Binds specifically to the boxA antiterminator sequence of the ribosomal RNA (rrn) operons. The sequence is that of Transcription antitermination protein NusB from Macrococcus caseolyticus (strain JCSC5402) (Macrococcoides caseolyticum).